The sequence spans 325 residues: 8-oxo-dGDP phosphatase NUDT18 (325 aa).

The region spanning 38–163 (NVCYIVGAVI…DILSLIDAGL (126 aa)) is the Nudix hydrolase domain. Residue leucine 55 participates in Mg(2+) binding. Positions 73 to 94 (GRMEECESILEALQREVREEAG) match the Nudix box motif.

Belongs to the Nudix hydrolase family. Mn(2+) is required as a cofactor. It depends on Mg(2+) as a cofactor.

It catalyses the reaction 8-oxo-dGDP + H2O = 8-oxo-dGMP + phosphate + H(+). The enzyme catalyses 8-oxo-dADP + H2O = 8-oxo-dAMP + phosphate + H(+). It carries out the reaction 2-oxo-dADP + H2O = 2-oxo-dAMP + phosphate + H(+). The catalysed reaction is 8-oxo-GDP + H2O = 8-oxo-GMP + phosphate + H(+). Mediates the hydrolysis of oxidized nucleoside diphosphate derivatives. Hydrolyzes 8-oxo-7,8-dihydroguanine (8-oxo-Gua)-containing deoxyribo- and ribonucleoside diphosphates to the monophosphates. Hydrolyzes 8-oxo-dGDP and 8-oxo-GDP with the same efficiencies. Also hydrolyzes 8-OH-dADP and 2-OH-dADP. Exhibited no or minimal hydrolysis activity against 8-oxo-dGTP, 8-oxo-GTP, dGTP, GTP, dGDP and GDP. Probably removes oxidized guanine nucleotides from both the DNA and RNA precursor pools. This is 8-oxo-dGDP phosphatase NUDT18 (nudt18) from Danio rerio (Zebrafish).